The chain runs to 82 residues: Large ribosomal subunit protein bL27c (82 aa).

The segment at 1–22 is disordered; that stretch reads MAHKKGAGSTKNGRDSNSKRLG.

Belongs to the bacterial ribosomal protein bL27 family.

Its subcellular location is the plastid. The protein localises to the chloroplast. The sequence is that of Large ribosomal subunit protein bL27c (rpl27) from Chrysotila carterae (Marine alga).